Reading from the N-terminus, the 435-residue chain is Mitochondrial distribution and morphology protein 12 (435 aa).

Residues 1 to 435 form the SMP-LTD domain; it reads MSIEVDWGAA…VYPSFWTFLV (435 aa). Disordered regions lie at residues 73–113 and 186–268; these read DEDD…AINH and WNDS…TSEE. A compositionally biased stretch (basic and acidic residues) spans 96-113; the sequence is THPELNESSFRDDNAINH. A compositionally biased stretch (low complexity) spans 218–238; sequence SSNPTSRPSTSSTLPSHPSGS. Positions 251–268 are enriched in basic and acidic residues; it reads HGSHPEEHGHLDDPTSEE.

Belongs to the MDM12 family. As to quaternary structure, component of the ER-mitochondria encounter structure (ERMES) or MDM complex, composed of mmm1, mdm10, mdm12 and mdm34. A mmm1 homodimer associates with one molecule of mdm12 on each side in a pairwise head-to-tail manner, and the SMP-LTD domains of mmm1 and mdm12 generate a continuous hydrophobic tunnel for phospholipid trafficking.

The protein localises to the mitochondrion outer membrane. The protein resides in the endoplasmic reticulum membrane. Functionally, component of the ERMES/MDM complex, which serves as a molecular tether to connect the endoplasmic reticulum (ER) and mitochondria. Components of this complex are involved in the control of mitochondrial shape and protein biogenesis, and function in nonvesicular lipid trafficking between the ER and mitochondria. Mdm12 is required for the interaction of the ER-resident membrane protein mmm1 and the outer mitochondrial membrane-resident beta-barrel protein mdm10. The mdm12-mmm1 subcomplex functions in the major beta-barrel assembly pathway that is responsible for biogenesis of all mitochondrial outer membrane beta-barrel proteins, and acts in a late step after the SAM complex. The mdm10-mdm12-mmm1 subcomplex further acts in the TOM40-specific pathway after the action of the mdm12-mmm1 complex. Essential for establishing and maintaining the structure of mitochondria and maintenance of mtDNA nucleoids. The polypeptide is Mitochondrial distribution and morphology protein 12 (Aspergillus niger (strain ATCC MYA-4892 / CBS 513.88 / FGSC A1513)).